The chain runs to 136 residues: uncharacterized protein (136 aa).

The protein belongs to the mimivirus L163/R849 family.

This is an uncharacterized protein from Acanthamoeba polyphaga mimivirus (APMV).